A 172-amino-acid polypeptide reads, in one-letter code: Ribosome maturation factor RimM (172 aa).

Positions 97 to 170 (DDEYYYDEII…LITIDVLEGL (74 aa)) constitute a PRC barrel domain.

The protein belongs to the RimM family. Binds ribosomal protein uS19.

Its subcellular location is the cytoplasm. Its function is as follows. An accessory protein needed during the final step in the assembly of 30S ribosomal subunit, possibly for assembly of the head region. Essential for efficient processing of 16S rRNA. May be needed both before and after RbfA during the maturation of 16S rRNA. It has affinity for free ribosomal 30S subunits but not for 70S ribosomes. The chain is Ribosome maturation factor RimM from Leuconostoc citreum (strain KM20).